The chain runs to 367 residues: Epoxide hydrolase 3 (367 aa).

The chain crosses the membrane as a helical span at residues 21-41; that stretch reads GVFFWVLVYVAALLAAVSYIP. Asp-173 functions as the Nucleophile in the catalytic mechanism. Tyr-285 acts as the Proton donor in catalysis. The active-site Proton acceptor is His-340.

Belongs to the AB hydrolase superfamily. Epoxide hydrolase family.

The protein resides in the microsome membrane. The catalysed reaction is an epoxide + H2O = an ethanediol. It catalyses the reaction 9,10-epoxyoctadecanoate + H2O = 9,10-dihydroxyoctadecanoate. It carries out the reaction 9,10-epoxy-(12Z)-octadecenoate + H2O = 9,10-dihydroxy-(12Z)-octadecenoate. The enzyme catalyses 8,9-epoxy-(5Z,11Z,14Z)-eicosatrienoate + H2O = 8,9-dihydroxy-(5Z,11Z,14Z)-eicosatrienoate. The catalysed reaction is 11,12-epoxy-(5Z,8Z,14Z)-eicosatrienoate + H2O = 11,12-dihydroxy-(5Z,8Z,14Z)-eicosatrienoate. It catalyses the reaction 14,15-epoxy-(5Z,8Z,11Z)-eicosatrienoate + H2O = 14,15-dihydroxy-(5Z,8Z,11Z)-eicosatrienoate. Inhibited by 1-(1-acetylpiperidin-4-yl)-3-(4-(trifl uoromethoxy)phenyl)urea (TPAU), 1-cyclohexyl-3-dodecylurea (CDU), 12-(3-adamantan-1-yl-ureido)-dodecanoic acid (AUDA), 1-((3S, 5S, 7S)-adamantan-1-yl)-3-(5-(2-(2-ethoxyethoxy) ethoxy)pentyl)urea (AEPU) and to a lesser extent by 8-(3-((3S, 5S, 7S)-adamantan-1-yl)ureido) octanoic acid (AUOA). In terms of biological role, catalyzes the hydrolysis of epoxide-containing fatty acids. Active in vitro against epoxyeicosatrienoic acids (EETs) including 8,9-EET, 9,10-EET, 11,12-EET and 14,15-EET and leukotoxin. The protein is Epoxide hydrolase 3 (ephx3) of Xenopus tropicalis (Western clawed frog).